The sequence spans 304 residues: PTB domain-containing engulfment adapter protein 1 (304 aa).

At T16 the chain carries Phosphothreonine. The region spanning 21-176 is the PID domain; sequence SKHYIPYNAK…AGMQKRIQDL (156 aa). Residues 159-200 adopt a coiled-coil conformation; sequence DVETRKQIAGMQKRIQDLETENMELKNKVQDLESRLRTTQVS. At S223 the chain carries Phosphoserine.

It belongs to the ced-6 family. In terms of assembly, homodimer. Interacts with clathrin and MEGF10. Interacts with GDP-bound ARF6, but not with GTP-bound ARF6. Part of a complex composed of GULP1, ACAP1 and ARF6. Interacts with ACAP1, LRP1 and STAB2. As to expression, detected throughout the brain, particularly in Purkinje cells, hippocampal and cortical neurons (at protein level).

Its subcellular location is the cytoplasm. In terms of biological role, modulates cellular glycosphingolipid and cholesterol transport. May play a role in the internalization of various LRP1 ligands, such as PSAP. May function as an adapter protein. Required for efficient phagocytosis of apoptotic cells. Increases cellular levels of GTP-bound ARF6. The chain is PTB domain-containing engulfment adapter protein 1 (Gulp1) from Mus musculus (Mouse).